A 607-amino-acid chain; its full sequence is Elongation factor 4 (607 aa).

Residues 11–193 (GKIRNFSIIA…QIVEKVPAPT (183 aa)) enclose the tr-type G domain. Residues 23 to 28 (DHGKST) and 140 to 143 (NKID) contribute to the GTP site.

The protein belongs to the TRAFAC class translation factor GTPase superfamily. Classic translation factor GTPase family. LepA subfamily.

The protein localises to the cell membrane. The enzyme catalyses GTP + H2O = GDP + phosphate + H(+). Required for accurate and efficient protein synthesis under certain stress conditions. May act as a fidelity factor of the translation reaction, by catalyzing a one-codon backward translocation of tRNAs on improperly translocated ribosomes. Back-translocation proceeds from a post-translocation (POST) complex to a pre-translocation (PRE) complex, thus giving elongation factor G a second chance to translocate the tRNAs correctly. Binds to ribosomes in a GTP-dependent manner. In Streptococcus pneumoniae (strain Taiwan19F-14), this protein is Elongation factor 4.